A 618-amino-acid polypeptide reads, in one-letter code: Putative UDP-glucuronate:xylan alpha-glucuronosyltransferase 3 (618 aa).

Residues 32 to 54 form a helical; Signal-anchor for type II membrane protein membrane-spanning segment; the sequence is GVKFNTLKLVLICIMLGALFTIY. Residues Asp-379 and Asp-381 each contribute to the Mn(2+) site. Substrate-binding positions include 379–381, 408–410, 435–439, and 489–495; these read DAD, NSG, NGGDQ, and HYLGYNK. A Mn(2+)-binding site is contributed by His-489. A compositionally biased stretch (low complexity) spans 598–608; it reads TNNSSTTTTSS. A disordered region spans residues 598-618; the sequence is TNNSSTTTTSSPPHKTALPSL.

It belongs to the glycosyltransferase 8 family. Glycogenin subfamily. Mn(2+) serves as cofactor.

It localises to the golgi apparatus membrane. In terms of biological role, may be involved in the substitutions of the xylan backbone in stem glucuronoxylan. The protein is Putative UDP-glucuronate:xylan alpha-glucuronosyltransferase 3 (GUX3) of Arabidopsis thaliana (Mouse-ear cress).